The following is a 467-amino-acid chain: Dimethylamine methyltransferase MtbB1 (467 aa).

Pyl-356 is a non-standard amino acid (pyrrolysine).

Belongs to the dimethylamine methyltransferase family.

The catalysed reaction is Co(I)-[dimethylamine-specific corrinoid protein] + dimethylamine + H(+) = methyl-Co(III)-[dimethylamine-specific corrinoid protein] + methylamine. Its pathway is one-carbon metabolism; methanogenesis from dimethylamine. Its function is as follows. Catalyzes the transfer of a methyl group from dimethylamine to the corrinoid cofactor of MtbC. In Methanosarcina barkeri (strain Fusaro / DSM 804), this protein is Dimethylamine methyltransferase MtbB1 (mtbB1).